We begin with the raw amino-acid sequence, 177 residues long: Glia associated membrane protein glam-1 (177 aa).

3 helical membrane passes run 19-39 (PLVV…FWMS), 42-62 (FGMA…LFGA), and 76-96 (VTFA…VVFA).

Its subcellular location is the membrane. This is Glia associated membrane protein glam-1 from Caenorhabditis elegans.